Here is a 1000-residue protein sequence, read N- to C-terminus: ATP-dependent DNA/RNA helicase DHX36 (1000 aa).

The segment at Met1 to Gly43 is required for recruitment to cytoplasmic stress granules. Positions Met1–Glu53 are disordered. Positions Met1–Ala96 are required for the pre-miR-134 transport. Positions Met1–Met192 are necessary for nuclear and nucleolar caps localizations. Gly residues predominate over residues Pro15–Gly40. Residues His45–Lys67 are DSM (DHX36-specific motif). The interval His45 to Lys97 is required for G4-DNA- and G4-RNA-binding. RecA-like domain regions lie at residues Asn98–Ile378 and Pro379–Leu620. Phosphoserine is present on Ser153. Residues Val209 to Pro379 form the Helicase ATP-binding domain. Position 225 to 230 (Gly225 to Thr230) interacts with ATP. The interval Arg257–Gln309 is necessary for interaction with single-stranded DNA at the 3'-end of the G4-DNA structure. Residues Asp326 to His329 carry the DEAH box motif. Mg(2+) is bound by residues Glu327 and His329. One can recognise a Helicase C-terminal domain in the interval Ala469 to Arg639. The tract at residues Trp490 to Ser549 is necessary for interaction with single-stranded DNA at the 3'-end of the G4-DNA structure. A Nuclear localization signal motif is present at residues Asp509 to Met520. ATP contacts are provided by residues Ser549 and Arg594–Arg597. A WH domain region spans residues Pro621 to Val690. 3 necessary for interaction with single-stranded DNA at the 3'-end of the G4-DNA structure regions span residues Glu630–Pro689, Asn841–His852, and His862–Tyr892. Positions Pro833–Val897 are OB-fold-like subdomains. The residue at position 939 (Lys939) is an N6-acetyllysine.

In terms of assembly, found in a multi-helicase-TICAM1 complex at least composed of DHX36, DDX1, DDX21 and TICAM1; this complex exists in resting cells with or without dsRNA poly(I:C) ligand stimulation. Interacts (via C-terminus) with TICAM1 (via TIR domain). Interacts (via C-terminus) with DDX21; this interaction serves as bridges to TICAM1. Interacts with TERT; this interaction is dependent on the ability of DHX36 to bind to the G-quadruplex RNA (G4-RNA) structure present in the telomerase RNA template component (TERC). Interacts with DKC1; this interaction is dependent on the ability of DHX36 to bind to the G4-RNA structure present in TERC. Interacts with PARN; this interaction stimulates PARN to enhance uPA mRNA decay. Interacts with EXOSC3; this interaction occurs in a RNase-insensitive manner. Interacts with EXOSC10; this interaction occurs in a RNase-insensitive manner. Interacts with ILF3; this interaction occurs in a RNA-dependent manner. Interacts with ELAVL1; this interaction occurs in an RNA-dependent manner. Interacts with DDX5; this interaction occurs in a RNA-dependent manner. Interacts with DDX17; this interaction occurs in a RNA-dependent manner. Interacts with HDAC1; this interaction occurs in a RNA-dependent manner. Interacts with HDAC3; this interaction occurs in a RNA-dependent manner. Interacts with HDAC4. Interacts with AGO1. Interacts with AGO2. Interacts with ERCC6. The cofactor is Mg(2+).

The protein localises to the nucleus. It localises to the cytoplasm. The protein resides in the cytosol. Its subcellular location is the stress granule. It is found in the nucleus speckle. The protein localises to the chromosome. It localises to the telomere. The protein resides in the mitochondrion. Its subcellular location is the perikaryon. It is found in the cell projection. The protein localises to the dendrite. It localises to the axon. It carries out the reaction ATP + H2O = ADP + phosphate + H(+). Its activity is regulated as follows. ATPase activity is enhanced in the presence of homomeric poly(U) RNAs, but not by double-stranded DNA (dsDNA), double-stranded RNA (dsRNA) and tRNA. In terms of biological role, multifunctional ATP-dependent helicase that unwinds G-quadruplex (G4) structures. Plays a role in many biological processes such as genomic integrity, gene expression regulations and as a sensor to initiate antiviral responses. G4 structures correspond to helical structures containing guanine tetrads. Binds with high affinity to and unwinds G4 structures that are formed in nucleic acids (G4-DNA and G4-RNA). Plays a role in genomic integrity. Converts the G4-RNA structure present in telomerase RNA template component (TREC) into a double-stranded RNA to promote P1 helix formation that acts as a template boundary ensuring accurate reverse transcription. Plays a role in transcriptional regulation. Resolves G4-DNA structures in promoters of genes, such as YY1, KIT/c-kit and ALPL and positively regulates their expression. Plays a role in post-transcriptional regulation. Unwinds a G4-RNA structure located in the 3'-UTR polyadenylation site of the pre-mRNA TP53 and stimulates TP53 pre-mRNA 3'-end processing in response to ultraviolet (UV)-induced DNA damage. Binds to the precursor-microRNA-134 (pre-miR-134) terminal loop and regulates its transport into the synapto-dendritic compartment. Involved in the pre-miR-134-dependent inhibition of target gene expression and the control of dendritic spine size. Plays a role in the regulation of cytoplasmic mRNA translation and mRNA stability. Binds to both G4-RNA structures and alternative non-quadruplex-forming sequence within the 3'-UTR of the PITX1 mRNA regulating negatively PITX1 protein expression. Binds to both G4-RNA structure in the 5'-UTR and AU-rich elements (AREs) localized in the 3'-UTR of NKX2-5 mRNA to either stimulate protein translation or induce mRNA decay in an ELAVL1-dependent manner, respectively. Also binds to ARE sequences present in several mRNAs mediating exosome-mediated 3'-5' mRNA degradation. Involved in cytoplasmic urokinase-type plasminogen activator (uPA) mRNA decay. Component of a multi-helicase-TICAM1 complex that acts as a cytoplasmic sensor of viral double-stranded RNA (dsRNA) and plays a role in the activation of a cascade of antiviral responses including the induction of pro-inflammatory cytokines via the adapter molecule TICAM1. Required for the early embryonic development and hematopoiesis. Involved in the regulation of cardioblast differentiation and proliferation during heart development. Involved in spermatogonia differentiation. May play a role in ossification. This Rattus norvegicus (Rat) protein is ATP-dependent DNA/RNA helicase DHX36.